A 112-amino-acid chain; its full sequence is ATP synthase epsilon chain (112 aa).

This sequence belongs to the ATPase epsilon chain family. F-type ATPases have 2 components, CF(1) - the catalytic core - and CF(0) - the membrane proton channel. CF(1) has five subunits: alpha(3), beta(3), gamma(1), delta(1), epsilon(1). CF(0) has three main subunits: a, b and c.

It is found in the cell inner membrane. In terms of biological role, produces ATP from ADP in the presence of a proton gradient across the membrane. The polypeptide is ATP synthase epsilon chain (atpC) (Rickettsia conorii (strain ATCC VR-613 / Malish 7)).